The sequence spans 183 residues: GTP cyclohydrolase 1 (183 aa).

3 residues coordinate Zn(2+): cysteine 71, histidine 74, and cysteine 142.

This sequence belongs to the GTP cyclohydrolase I family. Toroid-shaped homodecamer, composed of two pentamers of five dimers.

The enzyme catalyses GTP + H2O = 7,8-dihydroneopterin 3'-triphosphate + formate + H(+). The protein operates within cofactor biosynthesis; 7,8-dihydroneopterin triphosphate biosynthesis; 7,8-dihydroneopterin triphosphate from GTP: step 1/1. This chain is GTP cyclohydrolase 1, found in Leptospira interrogans serogroup Icterohaemorrhagiae serovar copenhageni (strain Fiocruz L1-130).